Reading from the N-terminus, the 485-residue chain is Ribulose bisphosphate carboxylase large chain (485 aa).

Substrate is bound by residues Asn-124 and Thr-174. The Proton acceptor role is filled by Lys-176. Lys-178 is a binding site for substrate. The Mg(2+) site is built by Lys-202, Asp-204, and Glu-205. Lys-202 bears the N6-carboxylysine mark. The active-site Proton acceptor is the His-294. Substrate contacts are provided by Arg-295, His-327, and Ser-379.

The protein belongs to the RuBisCO large chain family. Type I subfamily. Heterohexadecamer of 8 large chains and 8 small chains. Requires Mg(2+) as cofactor.

The catalysed reaction is 2 (2R)-3-phosphoglycerate + 2 H(+) = D-ribulose 1,5-bisphosphate + CO2 + H2O. It catalyses the reaction D-ribulose 1,5-bisphosphate + O2 = 2-phosphoglycolate + (2R)-3-phosphoglycerate + 2 H(+). Its function is as follows. RuBisCO catalyzes two reactions: the carboxylation of D-ribulose 1,5-bisphosphate, the primary event in carbon dioxide fixation, as well as the oxidative fragmentation of the pentose substrate. Both reactions occur simultaneously and in competition at the same active site. This Rhodopseudomonas palustris (strain HaA2) protein is Ribulose bisphosphate carboxylase large chain.